The chain runs to 48 residues: SPbeta prophage-derived uncharacterized protein YotE (48 aa).

In Bacillus subtilis (strain 168), this protein is SPbeta prophage-derived uncharacterized protein YotE (yotE).